A 431-amino-acid chain; its full sequence is 5-methylthioadenosine/S-adenosylhomocysteine deaminase (431 aa).

His68 and His70 together coordinate Zn(2+). Residues Glu97 and His186 each coordinate substrate. His213 serves as a coordination point for Zn(2+). Glu216 and Asp301 together coordinate substrate. Asp301 lines the Zn(2+) pocket.

It belongs to the metallo-dependent hydrolases superfamily. MTA/SAH deaminase family. Requires Zn(2+) as cofactor.

It carries out the reaction S-adenosyl-L-homocysteine + H2O + H(+) = S-inosyl-L-homocysteine + NH4(+). It catalyses the reaction S-methyl-5'-thioadenosine + H2O + H(+) = S-methyl-5'-thioinosine + NH4(+). Its function is as follows. Catalyzes the deamination of 5-methylthioadenosine and S-adenosyl-L-homocysteine into 5-methylthioinosine and S-inosyl-L-homocysteine, respectively. Is also able to deaminate adenosine. The polypeptide is 5-methylthioadenosine/S-adenosylhomocysteine deaminase (Halothermothrix orenii (strain H 168 / OCM 544 / DSM 9562)).